The chain runs to 185 residues: Signal peptidase complex subunit 3 (185 aa).

Topologically, residues 1-16 are cytoplasmic; it reads MHTSIQRIQQTFSQAS. Residues 17–37 form a helical; Signal-anchor for type II membrane protein membrane-spanning segment; it reads TVLSIIAAIVFVVSYIQLVVA. The Lumenal segment spans residues 38–185; that stretch reads NVWSLPEANF…KGSIKFPQLV (148 aa). Residue Asn151 is glycosylated (N-linked (GlcNAc...) asparagine).

Belongs to the SPCS3 family. In terms of assembly, component of the signal peptidase complex (SPC) composed of a catalytic subunit SEC11 and three accessory subunits SPC1, SPC2 and SPC3. The complex induces a local thinning of the ER membrane which is used to measure the length of the signal peptide (SP) h-region of protein substrates. This ensures the selectivity of the complex towards h-regions shorter than 18-20 amino acids. SPC associates with the translocon complex.

It localises to the endoplasmic reticulum membrane. In terms of biological role, essential component of the signal peptidase complex (SPC) which catalyzes the cleavage of N-terminal signal sequences from nascent proteins as they are translocated into the lumen of the endoplasmic reticulum. Essential for the SPC catalytic activity, possibly by stabilizing and positioning the active center of the complex close to the lumenal surface. Essential for viability. This is Signal peptidase complex subunit 3 (SPC3) from Yarrowia lipolytica (strain CLIB 122 / E 150) (Yeast).